The chain runs to 303 residues: Caspase-7 (303 aa).

The span at 1-21 (MADDQGCIEEQGVEDSANEDS) shows a compositional bias: acidic residues. The tract at residues 1–30 (MADDQGCIEEQGVEDSANEDSVDAKPDRSS) is disordered. Position 2 is an N-acetylalanine (Ala-2). Residues 2-23 (ADDQGCIEEQGVEDSANEDSVD) constitute a propeptide, N-terminally processed. Position 30 is a phosphoserine; by PAK2 (Ser-30). The residue at position 37 (Ser-37) is a Phosphoserine. The tract at residues 38–41 (KKKK) is exosite. The segment at 76–87 (KNFDKVTGMGVR) is loop L1. His-144 is a catalytic residue. At Thr-173 the chain carries Phosphothreonine; by PAK2. Cys-186 is a catalytic residue. The interval 187–196 (RGTELDDGIQ) is loop L2. Residues 199 to 206 (SGPINDTD) constitute a propeptide that is removed on maturation. The interval 226–238 (VPGYYSWRSPGRG) is loop L3. Arg-233 carries the post-translational modification (Microbial infection) ADP-riboxanated arginine. Position 239 is a phosphoserine; by PAK2 (Ser-239). Residues 274–288 (ESQSDDPHFHEKKQI) are loop L4.

This sequence belongs to the peptidase C14A family. In terms of assembly, heterotetramer that consists of two anti-parallel arranged heterodimers, each one formed by a 20 kDa (p20) and a 11 kDa (p11) subunit. Interacts with XIAP (via its second BIR domain); inhibiting CASP7 activity. Interacts with BIRC6/bruce. Interacts with ATXN3 (short isoform 1). Interacts with HSPA5. Post-translationally, cleavage by different proteases, such as granzyme B (GZMB), caspase-1 (CASP1), caspase-8 (CASP8), caspase-9 (CASP9) or caspase-10 (CASP10) generate the two active subunits. Its involvement in different programmed cell death processes is probably specified by the protease that activates CASP7. Cleaved and activated by initiator caspases (CASP8, CASP9 and/or CASP10), leading to execution phase of apoptosis. Cleavage and maturation by GZMB regulates granzyme-mediated programmed cell death. Cleaved and activated by CASP1 in response to bacterial infection. Propeptide domains can also be cleaved efficiently by CASP3. Active heterodimers between the small subunit of caspase-7 and the large subunit of CASP3, and vice versa, also occur. Also cleaved at the N-terminus at alternative sites by CAPN1, leading to its activation. In terms of processing, phosphorylation at Ser-30 and Ser-239 by PAK2 inhibits its activity. Phosphorylation at Ser-30 prevents cleavage and activation by initiator caspase CASP9, while phosphorylation at Ser-239 prevents thiol protease activity by preventing substrate-binding. (Microbial infection) ADP-riboxanation by C.violaceum CopC blocks CASP7 processing, preventing CASP7 activation and ability to recognize and cleave substrates. Post-translationally, ubiquitinated by BIRC6; this activity is inhibited by DIABLO/SMAC. In terms of tissue distribution, highly expressed in lung, skeletal muscle, liver, kidney, spleen and heart, and moderately in testis. No expression in the brain.

The protein resides in the cytoplasm. The protein localises to the cytosol. It is found in the nucleus. It localises to the secreted. Its subcellular location is the extracellular space. The catalysed reaction is Strict requirement for an Asp residue at position P1 and has a preferred cleavage sequence of Asp-Glu-Val-Asp-|-.. With respect to regulation, during activation, the N-terminal disordered prodomain is removed by cleavage. Concomitantly, double cleavage gives rise to a large Caspase-7 subunit p20 and a small Caspase-7 subunit p11. The two large and two small subunits then assemble to form the active CASP7 complex. Can be cleaved and activated by different caspases, depending on the context. Cleaved and activated by initiator caspases (CASP8, CASP9 and/or CASP10), leading to execution phase of apoptosis. Inhibited by XIAP, which directly binds to the active site pocket and obstructs substrate entry. Cleavage and maturation by GZMB regulates granzyme-mediated programmed cell death. Cleavage and maturation by CASP1 regulates pyroptosis. Phosphorylation at Ser-30 and Ser-239 by PAK2 inhibits its activity. Inhibited by isatin sulfonamides. Inhibited by 2-(2,4-Dichlorophenoxy)- N-(2-mercapto-ethyl)-acetamide (DICA) and 5-Fluoro-1H-indole-2- carboxylic acid (2-mercapto-ethyl)-amide (FICA) allosteric inhibitors, which disrupt an interaction between Arg-187 and Tyr-223. Specifically inhibited by DARPin D7.18 and D7.43, which specifically bind to the precursor CASP7 and prevent its processing and activation. Inhibited by BIRC6; following inhibition of BIRC6-caspase binding by DIABLO/SMAC, BIRC6 is subjected to caspase cleavage, leading to an increase in active caspases. In terms of biological role, thiol protease involved in different programmed cell death processes, such as apoptosis, pyroptosis or granzyme-mediated programmed cell death, by proteolytically cleaving target proteins. Has a marked preference for Asp-Glu-Val-Asp (DEVD) consensus sequences, with some plasticity for alternate non-canonical sequences. Its involvement in the different programmed cell death processes is probably determined by upstream proteases that activate CASP7. Acts as an effector caspase involved in the execution phase of apoptosis: following cleavage and activation by initiator caspases (CASP8, CASP9 and/or CASP10), mediates execution of apoptosis by catalyzing cleavage of proteins, such as CLSPN, PARP1, PTGES3 and YY1. Compared to CASP3, acts as a minor executioner caspase and cleaves a limited set of target proteins. Acts as a key regulator of the inflammatory response in response to bacterial infection by catalyzing cleavage and activation of the sphingomyelin phosphodiesterase SMPD1 in the extracellular milieu, thereby promoting membrane repair. Regulates pyroptosis in intestinal epithelial cells: cleaved and activated by CASP1 in response to S.typhimurium infection, promoting its secretion to the extracellular milieu, where it catalyzes activation of SMPD1, generating ceramides that repair membranes and counteract the action of gasdermin-D (GSDMD) pores. Regulates granzyme-mediated programmed cell death in hepatocytes: cleaved and activated by granzyme B (GZMB) in response to bacterial infection, promoting its secretion to the extracellular milieu, where it catalyzes activation of SMPD1, generating ceramides that repair membranes and counteract the action of perforin (PRF1) pores. Following cleavage by CASP1 in response to inflammasome activation, catalyzes processing and inactivation of PARP1, alleviating the transcription repressor activity of PARP1. Acts as an inhibitor of type I interferon production during virus-induced apoptosis by mediating cleavage of antiviral proteins CGAS, IRF3 and MAVS, thereby preventing cytokine overproduction. Cleaves and activates sterol regulatory element binding proteins (SREBPs). Cleaves phospholipid scramblase proteins XKR4, XKR8 and XKR9. In case of infection, catalyzes cleavage of Kaposi sarcoma-associated herpesvirus protein ORF57, thereby preventing expression of viral lytic genes. Cleaves BIRC6 following inhibition of BIRC6-caspase binding by DIABLO/SMAC. Functionally, lacks enzymatic activity. This chain is Caspase-7, found in Homo sapiens (Human).